Consider the following 609-residue polypeptide: Hemagglutinin glycoprotein (609 aa).

The Intravirion portion of the chain corresponds to 1-34; that stretch reads MSSPRDRVNAFYKDNLQFKNTRVVLNKEQLLIER. A helical; Signal-anchor for type II membrane protein membrane pass occupies residues 35 to 58; the sequence is PYMLLAVLFVMFLSLVGLLAIAGI. Residues 59–609 are Virion surface-facing; the sequence is RLHRAAVNTA…VGIEITCNSR (551 aa). N-linked (GlcNAc...) asparagine; by host glycosylation is found at Asn168, Asn200, Asn215, and Asn395.

This sequence belongs to the paramyxoviruses hemagglutinin-neuraminidase family. Non-sialidase subfamily.

It is found in the virion membrane. The protein localises to the host membrane. Attaches the virus to cell receptors and thereby initiating infection. Binding of H protein to the receptor induces a conformational change that allows the F protein to trigger virion/cell membranes fusion. Down-regulates human MCP/CD46 cell surface expression. The sequence is that of Hemagglutinin glycoprotein (H) from Rinderpest virus (strain L) (RDV).